The chain runs to 123 residues: Large ribosomal subunit protein bL17 (123 aa).

This sequence belongs to the bacterial ribosomal protein bL17 family. Part of the 50S ribosomal subunit. Contacts protein L32.

This Borrelia garinii subsp. bavariensis (strain ATCC BAA-2496 / DSM 23469 / PBi) (Borreliella bavariensis) protein is Large ribosomal subunit protein bL17.